The following is a 447-amino-acid chain: NADH-quinone oxidoreductase subunit F (447 aa).

61 to 70 (GRGGAGFSTG) is an NAD(+) binding site. 174–221 (GAGRYICGEETALINSLEGRRANPRAKPPFPAVFGLWGKPTCVNNVET) contacts FMN. [4Fe-4S] cluster-binding residues include Cys-352, Cys-355, Cys-358, and Cys-399.

Belongs to the complex I 51 kDa subunit family. In terms of assembly, composed of 13 different subunits. Subunits NuoCD, E, F, and G constitute the peripheral sector of the complex. It depends on [4Fe-4S] cluster as a cofactor. FMN is required as a cofactor.

It carries out the reaction a quinone + NADH + 5 H(+)(in) = a quinol + NAD(+) + 4 H(+)(out). Functionally, NDH-1 shuttles electrons from NADH, via FMN and iron-sulfur (Fe-S) centers, to quinones in the respiratory chain. Couples the redox reaction to proton translocation (for every two electrons transferred, four hydrogen ions are translocated across the cytoplasmic membrane), and thus conserves the redox energy in a proton gradient. The sequence is that of NADH-quinone oxidoreductase subunit F (nuoF) from Buchnera aphidicola subsp. Schizaphis graminum (strain Sg).